Here is a 445-residue protein sequence, read N- to C-terminus: NADH-quinone oxidoreductase subunit F (445 aa).

Residue Gly-61–Gly-70 coordinates NAD(+). Position 174-221 (Gly-174–Thr-221) interacts with FMN. Cys-351, Cys-354, Cys-357, and Cys-398 together coordinate [4Fe-4S] cluster.

Belongs to the complex I 51 kDa subunit family. In terms of assembly, composed of 13 different subunits. Subunits NuoCD, E, F, and G constitute the peripheral sector of the complex. FMN is required as a cofactor. The cofactor is [4Fe-4S] cluster.

It catalyses the reaction a quinone + NADH + 5 H(+)(in) = a quinol + NAD(+) + 4 H(+)(out). In terms of biological role, NDH-1 shuttles electrons from NADH, via FMN and iron-sulfur (Fe-S) centers, to quinones in the respiratory chain. The immediate electron acceptor for the enzyme in this species is believed to be ubiquinone. Couples the redox reaction to proton translocation (for every two electrons transferred, four hydrogen ions are translocated across the cytoplasmic membrane), and thus conserves the redox energy in a proton gradient. This Salmonella typhimurium (strain LT2 / SGSC1412 / ATCC 700720) protein is NADH-quinone oxidoreductase subunit F (nuoF).